The sequence spans 292 residues: Nucleotide-binding protein Ldb0621 (292 aa).

ATP is bound at residue 14-21 (GMSGAGKT). GTP is bound at residue 64–67 (DLRV).

The protein belongs to the RapZ-like family.

Functionally, displays ATPase and GTPase activities. The sequence is that of Nucleotide-binding protein Ldb0621 from Lactobacillus delbrueckii subsp. bulgaricus (strain ATCC 11842 / DSM 20081 / BCRC 10696 / JCM 1002 / NBRC 13953 / NCIMB 11778 / NCTC 12712 / WDCM 00102 / Lb 14).